The sequence spans 1400 residues: DNA-directed RNA polymerase subunit beta (1400 aa).

This sequence belongs to the RNA polymerase beta chain family. The RNAP catalytic core consists of 2 alpha, 1 beta, 1 beta' and 1 omega subunit. When a sigma factor is associated with the core the holoenzyme is formed, which can initiate transcription.

It catalyses the reaction RNA(n) + a ribonucleoside 5'-triphosphate = RNA(n+1) + diphosphate. In terms of biological role, DNA-dependent RNA polymerase catalyzes the transcription of DNA into RNA using the four ribonucleoside triphosphates as substrates. The protein is DNA-directed RNA polymerase subunit beta of Acidiphilium cryptum (strain JF-5).